A 283-amino-acid polypeptide reads, in one-letter code: Pantothenate synthetase (283 aa).

31–38 is an ATP binding site; it reads MGALHDGH. The active-site Proton donor is H38. Q62 is a (R)-pantoate binding site. Q62 is a beta-alanine binding site. 148–151 contributes to the ATP binding site; the sequence is GKKD. Q154 lines the (R)-pantoate pocket. Residues V177 and 185 to 188 contribute to the ATP site; that span reads KSSR.

Belongs to the pantothenate synthetase family. Homodimer.

Its subcellular location is the cytoplasm. It carries out the reaction (R)-pantoate + beta-alanine + ATP = (R)-pantothenate + AMP + diphosphate + H(+). The protein operates within cofactor biosynthesis; (R)-pantothenate biosynthesis; (R)-pantothenate from (R)-pantoate and beta-alanine: step 1/1. Its function is as follows. Catalyzes the condensation of pantoate with beta-alanine in an ATP-dependent reaction via a pantoyl-adenylate intermediate. The chain is Pantothenate synthetase from Staphylococcus aureus (strain USA300).